Here is a 275-residue protein sequence, read N- to C-terminus: Large ribosomal subunit protein uL2 (275 aa).

Disordered regions lie at residues 28 to 54 (APHA…TRHI) and 223 to 275 (VAMN…RNKK).

It belongs to the universal ribosomal protein uL2 family. As to quaternary structure, part of the 50S ribosomal subunit. Forms a bridge to the 30S subunit in the 70S ribosome.

Its function is as follows. One of the primary rRNA binding proteins. Required for association of the 30S and 50S subunits to form the 70S ribosome, for tRNA binding and peptide bond formation. It has been suggested to have peptidyltransferase activity; this is somewhat controversial. Makes several contacts with the 16S rRNA in the 70S ribosome. The sequence is that of Large ribosomal subunit protein uL2 from Saccharophagus degradans (strain 2-40 / ATCC 43961 / DSM 17024).